Consider the following 338-residue polypeptide: Ketol-acid reductoisomerase (NADP(+)) (338 aa).

The 181-residue stretch at 1 to 181 (MNVFYDKDAD…GGGRAGIIET (181 aa)) folds into the KARI N-terminal Rossmann domain. NADP(+) contacts are provided by residues 24-27 (YGSQ), arginine 47, and serine 52. Residue histidine 107 is part of the active site. Glycine 133 is an NADP(+) binding site. The KARI C-terminal knotted domain occupies 182–327 (NFREETETDL…AKLRAMMPWI (146 aa)). Mg(2+)-binding residues include aspartate 190, glutamate 194, glutamate 226, and glutamate 230. Residue serine 251 participates in substrate binding.

Belongs to the ketol-acid reductoisomerase family. The cofactor is Mg(2+).

The enzyme catalyses (2R)-2,3-dihydroxy-3-methylbutanoate + NADP(+) = (2S)-2-acetolactate + NADPH + H(+). The catalysed reaction is (2R,3R)-2,3-dihydroxy-3-methylpentanoate + NADP(+) = (S)-2-ethyl-2-hydroxy-3-oxobutanoate + NADPH + H(+). Its pathway is amino-acid biosynthesis; L-isoleucine biosynthesis; L-isoleucine from 2-oxobutanoate: step 2/4. It functions in the pathway amino-acid biosynthesis; L-valine biosynthesis; L-valine from pyruvate: step 2/4. Involved in the biosynthesis of branched-chain amino acids (BCAA). Catalyzes an alkyl-migration followed by a ketol-acid reduction of (S)-2-acetolactate (S2AL) to yield (R)-2,3-dihydroxy-isovalerate. In the isomerase reaction, S2AL is rearranged via a Mg-dependent methyl migration to produce 3-hydroxy-3-methyl-2-ketobutyrate (HMKB). In the reductase reaction, this 2-ketoacid undergoes a metal-dependent reduction by NADPH to yield (R)-2,3-dihydroxy-isovalerate. This Burkholderia cenocepacia (strain ATCC BAA-245 / DSM 16553 / LMG 16656 / NCTC 13227 / J2315 / CF5610) (Burkholderia cepacia (strain J2315)) protein is Ketol-acid reductoisomerase (NADP(+)).